The primary structure comprises 417 residues: Glutamyl-tRNA reductase (417 aa).

Substrate contacts are provided by residues 49–52, serine 109, 114–116, and glutamine 120; these read TCNR and ESQ. Cysteine 50 functions as the Nucleophile in the catalytic mechanism. NADP(+) is bound at residue 189–194; sequence GLGEIG.

The protein belongs to the glutamyl-tRNA reductase family. As to quaternary structure, homodimer.

The enzyme catalyses (S)-4-amino-5-oxopentanoate + tRNA(Glu) + NADP(+) = L-glutamyl-tRNA(Glu) + NADPH + H(+). It functions in the pathway porphyrin-containing compound metabolism; protoporphyrin-IX biosynthesis; 5-aminolevulinate from L-glutamyl-tRNA(Glu): step 1/2. Catalyzes the NADPH-dependent reduction of glutamyl-tRNA(Glu) to glutamate 1-semialdehyde (GSA). This chain is Glutamyl-tRNA reductase, found in Streptococcus sanguinis (strain SK36).